The sequence spans 43 residues: Protein PsbN (43 aa).

Residues Thr-5–Phe-27 form a helical membrane-spanning segment.

It belongs to the PsbN family.

It localises to the plastid. It is found in the chloroplast thylakoid membrane. Its function is as follows. May play a role in photosystem I and II biogenesis. This is Protein PsbN from Piper cenocladum (Ant piper).